Consider the following 98-residue polypeptide: Large ribosomal subunit protein bL27 (98 aa).

The propeptide occupies 1-9; it reads MLKMNLQLF.

The protein belongs to the bacterial ribosomal protein bL27 family. The N-terminus is cleaved by ribosomal processing cysteine protease Prp.

In Desulfitobacterium hafniense (strain DSM 10664 / DCB-2), this protein is Large ribosomal subunit protein bL27.